A 1105-amino-acid chain; its full sequence is MEESGQLSDFKLPEGIKDPSLEFDLIECLGRGSFGSVYKATYKKTGNIVAVKLVPINEDFQEILKEINIMKQCKSKYVVQYYGNYFKDETCWIIMEYCAFGSVSDMMNITNRVLNEEQIALVCYSTLKGLYYLHRNSKIHRDIKPGNILVSEEGECKLADFGVSGQLSERTRKRNTVIGTPFFLAPEVIQEVGYDNKADIWALGISAIEMAEFHPPYHDLHPMRVLFMIPTSTSPTLKEPHKWSPEFSDFIALCLAKEQSQRPSAKDLLKHSFFEKKLKGSYVMKSLSETAQMVIERCGGREEAVKAAAERKSKQSGVSVDFIHCESVDEPDSSDEEDLLERNNKRLSTQIQQKKEQQAQQQQQQAQQQQQQQQQQQQQYQPPSPNNNNRTTTKNNDINELDSLLNNMMMSSSASASTSPSPSSISSNGNKSGTTTNDYHTGNGRTSSSSPQFGLQHQNSSNSFPSSPNTVPSVESKPRQPASELDDLLEEMMNPSFGNRARNSSGGGGGLTPIGSPITKRPTPTMQSSTTTTTSSSSLPLPMSPSVYLSPTRVSGIWSGESAGGCANTTLWRKNPQYLLQITATTTIRITLRQTGDKLVHIGFYFARSNTGANDQFRRRITLTKEYLVPGLDITFLKSTEVSAKITMEPGYYVIIPATFEPNQEGSFELDVTATSDNIGGQYNSNNNIKLSEIKGDRDWRIISDRFEWRGSSAGGSFSGSSATWKDNPKFFFETTQTSNTTIVLGKLSDIPKETYIGFYIFKADKNCPFISLTANNLYSKTSFVNGIEVVHTQQQMPPGCYIIVPCTYDSRQEGSFTLTCYSDCQQGSIYKLDLSEQILTVHGEWRGATSGGCLNHTTWRNNAQYLIHNTSSSPTKVTIMLEQLEKMDNQQLPFVGFYVAKSPTPNLDKKLFSLTPKDIVGNTEFINDYQVHFTSIMEPNTSYIIIPSTFTPGIEYPFNLRVITNQHNVIQISRLPEWSTRKLSGEWRGQSCGGRYSNTSSSWTLNPRFRFNLPRGGRFTIILAQAEKPSYNGIGFYYFKTLQDGTLREFVCKSGFICGKEIVLESSINEGVTGVVIPSTFEPNIQDSFNLTIYSEFDLDFYNN.

The region spanning 23 to 274 is the Protein kinase domain; sequence FDLIECLGRG…AKDLLKHSFF (252 aa). ATP-binding positions include 29-37 and Lys52; that span reads LGRGSFGSV. Asp142 serves as the catalytic Proton acceptor. 3 disordered regions span residues 348–396, 411–482, and 495–541; these read STQI…TKNN, SSSA…RQPA, and PSFG…SLPL. Low complexity-rich tracts occupy residues 358 to 396 and 411 to 437; these read QAQQ…TKNN and SSSA…TTTN. Over residues 438 to 458 the composition is skewed to polar residues; sequence DYHTGNGRTSSSSPQFGLQHQ. 2 stretches are compositionally biased toward low complexity: residues 459 to 473 and 513 to 541; these read NSSN…TVPS and PIGS…SLPL. Residues 516–1105 are calpain-like cysteine protease-like; that stretch reads SPITKRPTPT…SEFDLDFYNN (590 aa). Domain III stretches follow at residues 641-668, 791-830, 836-972, and 1076-1103; these read EVSA…EGSF, VHTQ…QGSI, SEQI…NVIQ, and VVIP…LDFY.

This sequence in the N-terminal section; belongs to the protein kinase superfamily. STE Ser/Thr protein kinase family. STE20 subfamily. The protein in the C-terminal section; belongs to the peptidase C2 family. Mn(2+) serves as cofactor.

It catalyses the reaction L-seryl-[protein] + ATP = O-phospho-L-seryl-[protein] + ADP + H(+). The catalysed reaction is L-threonyl-[protein] + ATP = O-phospho-L-threonyl-[protein] + ADP + H(+). In terms of biological role, probable serine/threonine-protein kinase. This is Serine/threonine-protein kinase 4 homolog B (krsB) from Dictyostelium discoideum (Social amoeba).